A 505-amino-acid polypeptide reads, in one-letter code: Bile acid-sensitive ion channel (505 aa).

A binds the plasma membrane and stabilizes the channel in the closed state region spans residues 1–30; that stretch reads MEQTEKSKVYAENGLLEKIKLCLSKKPLPS. Topologically, residues 1–61 are cytoplasmic; sequence MEQTEKSKVY…NIVQNRSKIR (61 aa). The helical transmembrane segment at 62-82 threads the bilayer; that stretch reads RVLWLVVVLGSVSLVTWQIYI. Topologically, residues 83 to 459 are extracellular; sequence RLLNYFTWPT…GLFCGASLIT (377 aa). Intrachain disulfides connect Cys-112/Cys-207, Cys-185/Cys-192, Cys-298/Cys-377, Cys-315/Cys-373, Cys-328/Cys-350, and Cys-330/Cys-342. N-linked (GlcNAc...) asparagine glycosylation is found at Asn-147, Asn-163, Asn-178, and Asn-179. Asn-306 carries N-linked (GlcNAc...) asparagine glycosylation. N-linked (GlcNAc...) asparagine glycosylation is found at Asn-370, Asn-405, and Asn-421. A GAS motif; ion selectivity filter motif is present at residues 454–456; the sequence is GAS. Residues 460 to 480 form a helical membrane-spanning segment; the sequence is IIEIIEYLFTNFYWICIFFLL. Over 481 to 505 the chain is Cytoplasmic; that stretch reads KISEMTQWTPPPQNHLGNKNRIEEC.

This sequence belongs to the amiloride-sensitive sodium channel (TC 1.A.6) family. ASIC5 subfamily. As to quaternary structure, forms homotrimeric channels. In terms of tissue distribution, detected in small intestine, duodenum and jejunum. Detected at very low levels in testis and rectum.

It localises to the apical cell membrane. The protein resides in the cell membrane. The enzyme catalyses Na(+)(in) = Na(+)(out). It carries out the reaction Li(+)(in) = Li(+)(out). It catalyses the reaction K(+)(in) = K(+)(out). The catalysed reaction is H(+)(in) = H(+)(out). Inhibited by the diuretic drug amiloride. Functionally, forms bile acid-gated sodium channels and may play a role in bile acid-dependent absorption and secretion by epithelial cells of the bile ducts. Displays high selectivity for sodium ions but can also permit the permeation of other cations. The gating could be indirect and the consequence of alterations of the membrane environment of the channel by bile acids. As a sodium channel of type II unipolar brush cells of the vestibulocerebellum, controlling the electrical activity of these cells, could play a role in motor coordination and balance. This is Bile acid-sensitive ion channel from Homo sapiens (Human).